A 440-amino-acid polypeptide reads, in one-letter code: Putative postmeiotic segregation increased 2-like protein 1 (440 aa).

Basic and acidic residues predominate over residues 164 to 178; it reads RVEHNVESSRWEPRR. Residues 164 to 215 form a disordered region; that stretch reads RVEHNVESSRWEPRRRGACGSRGGNFPSPRGGSGVASLERAESSSTEPAKAI. One can recognise a Histidine kinase domain in the interval 230-364; the sequence is PVVPSLSTAV…MTVSVKQLFS (135 aa).

The protein belongs to the DNA mismatch repair MutL/HexB family. As to expression, highly expressed in kidney, spleen, adrenal gland, ovary and cerebellum and to a lower extent in liver, esophagus, stomach, duodenum, colon, bladder, uterus, lung, pancreas and cerebrum. Not expressed in heart.

In Homo sapiens (Human), this protein is Putative postmeiotic segregation increased 2-like protein 1 (PMS2P1).